A 73-amino-acid chain; its full sequence is NADH dehydrogenase [ubiquinone] 1 beta subcomplex subunit 3-B (73 aa).

The chain crosses the membrane as a helical span at residues 31-48 (ALPGLGIGVAAFCVYLVG).

This sequence belongs to the complex I NDUFB3 subunit family. In terms of assembly, complex I is composed of at least 49 different subunits.

It is found in the mitochondrion inner membrane. Accessory subunit of the mitochondrial membrane respiratory chain NADH dehydrogenase (Complex I), that is believed not to be involved in catalysis. Complex I functions in the transfer of electrons from NADH to the respiratory chain. The immediate electron acceptor for the enzyme is believed to be ubiquinone. This is NADH dehydrogenase [ubiquinone] 1 beta subcomplex subunit 3-B from Arabidopsis thaliana (Mouse-ear cress).